The sequence spans 144 residues: Large ribosomal subunit protein uL11 (144 aa).

Belongs to the universal ribosomal protein uL11 family. As to quaternary structure, part of the ribosomal stalk of the 50S ribosomal subunit. Interacts with L10 and the large rRNA to form the base of the stalk. L10 forms an elongated spine to which L12 dimers bind in a sequential fashion forming a multimeric L10(L12)X complex. Contacts the CTC protein (RL25). Post-translationally, one or more lysine residues are methylated.

Functionally, forms part of the ribosomal stalk which helps the ribosome interact with GTP-bound translation factors. The protein is Large ribosomal subunit protein uL11 of Deinococcus radiodurans (strain ATCC 13939 / DSM 20539 / JCM 16871 / CCUG 27074 / LMG 4051 / NBRC 15346 / NCIMB 9279 / VKM B-1422 / R1).